An 89-amino-acid polypeptide reads, in one-letter code: Large ribosomal subunit protein bL27 (89 aa).

Residues 1-22 (MAHKKAGGSSRNGRDSESKRLG) are disordered.

The protein belongs to the bacterial ribosomal protein bL27 family.

The protein is Large ribosomal subunit protein bL27 of Rhizobium etli (strain CIAT 652).